The chain runs to 118 residues: Holo-[acyl-carrier-protein] synthase (118 aa).

The Mg(2+) site is built by Asp-8 and Glu-58.

Belongs to the P-Pant transferase superfamily. AcpS family. Mg(2+) serves as cofactor.

Its subcellular location is the cytoplasm. The catalysed reaction is apo-[ACP] + CoA = holo-[ACP] + adenosine 3',5'-bisphosphate + H(+). Transfers the 4'-phosphopantetheine moiety from coenzyme A to a Ser of acyl-carrier-protein. This chain is Holo-[acyl-carrier-protein] synthase, found in Listeria monocytogenes serotype 4a (strain HCC23).